A 247-amino-acid chain; its full sequence is tRNA pseudouridine synthase A (247 aa).

The active-site Nucleophile is the Asp-52. Tyr-113 serves as a coordination point for substrate.

The protein belongs to the tRNA pseudouridine synthase TruA family. Homodimer.

It carries out the reaction uridine(38/39/40) in tRNA = pseudouridine(38/39/40) in tRNA. Its function is as follows. Formation of pseudouridine at positions 38, 39 and 40 in the anticodon stem and loop of transfer RNAs. The protein is tRNA pseudouridine synthase A of Bartonella bacilliformis (strain ATCC 35685 / KC583 / Herrer 020/F12,63).